Here is a 181-residue protein sequence, read N- to C-terminus: Acireductone dioxygenase (181 aa).

Fe(2+) contacts are provided by His-100, His-102, Glu-106, and His-145. Ni(2+)-binding residues include His-100, His-102, Glu-106, and His-145.

The protein belongs to the acireductone dioxygenase (ARD) family. In terms of assembly, monomer. The cofactor is Fe(2+). It depends on Ni(2+) as a cofactor.

The catalysed reaction is 1,2-dihydroxy-5-(methylsulfanyl)pent-1-en-3-one + O2 = 3-(methylsulfanyl)propanoate + CO + formate + 2 H(+). The enzyme catalyses 1,2-dihydroxy-5-(methylsulfanyl)pent-1-en-3-one + O2 = 4-methylsulfanyl-2-oxobutanoate + formate + 2 H(+). It participates in amino-acid biosynthesis; L-methionine biosynthesis via salvage pathway; L-methionine from S-methyl-5-thio-alpha-D-ribose 1-phosphate: step 5/6. Its function is as follows. Catalyzes 2 different reactions between oxygen and the acireductone 1,2-dihydroxy-3-keto-5-methylthiopentene (DHK-MTPene) depending upon the metal bound in the active site. Fe-containing acireductone dioxygenase (Fe-ARD) produces formate and 2-keto-4-methylthiobutyrate (KMTB), the alpha-ketoacid precursor of methionine in the methionine recycle pathway. Ni-containing acireductone dioxygenase (Ni-ARD) produces methylthiopropionate, carbon monoxide and formate, and does not lie on the methionine recycle pathway. The protein is Acireductone dioxygenase of Trichodesmium erythraeum (strain IMS101).